A 347-amino-acid chain; its full sequence is D-alanine--D-alanine ligase (347 aa).

Residues 134–332 (KLYAKDLGIK…LAQSLPKTPK (199 aa)) form the ATP-grasp domain. 161-216 (LINFNFPFIIKPNSAGSSLGVSVVKEEKELNYALDSAFEYSKEVLIEPFIQGVKEY) is an ATP binding site. Mg(2+)-binding residues include aspartate 288, glutamate 300, and asparagine 302.

It belongs to the D-alanine--D-alanine ligase family. Requires Mg(2+) as cofactor. Mn(2+) is required as a cofactor.

The protein resides in the cytoplasm. The catalysed reaction is 2 D-alanine + ATP = D-alanyl-D-alanine + ADP + phosphate + H(+). Its pathway is cell wall biogenesis; peptidoglycan biosynthesis. Cell wall formation. This chain is D-alanine--D-alanine ligase, found in Helicobacter pylori (strain HPAG1).